A 226-amino-acid chain; its full sequence is X-linked lymphocyte-regulated protein 3A (226 aa).

A compositionally biased stretch (basic and acidic residues) spans Met1–Met18. The segment at Met1 to Pro72 is disordered. Over residues Asn21–Pro30 the composition is skewed to polar residues. Composition is skewed to basic and acidic residues over residues Glu39 to Ile48 and Gln56 to Leu65. Positions Glu155–Gln210 form a coiled coil.

It belongs to the XLR/SYCP3 family. As to expression, expressed in lymphoid cells.

The polypeptide is X-linked lymphocyte-regulated protein 3A (Xlr3a) (Mus musculus (Mouse)).